The following is a 430-amino-acid chain: Shufflon protein A' (430 aa).

A constant region region spans residues 1 to 361 (MKKYDRGWAS…TGAILSCQSG (361 aa)). The interval 362 to 430 (TWGTIGGKLK…GCIASCVTLN (69 aa)) is variable region.

This chain is Shufflon protein A', found in Escherichia coli.